Here is a 161-residue protein sequence, read N- to C-terminus: SsrA-binding protein (161 aa).

It belongs to the SmpB family.

It is found in the cytoplasm. In terms of biological role, required for rescue of stalled ribosomes mediated by trans-translation. Binds to transfer-messenger RNA (tmRNA), required for stable association of tmRNA with ribosomes. tmRNA and SmpB together mimic tRNA shape, replacing the anticodon stem-loop with SmpB. tmRNA is encoded by the ssrA gene; the 2 termini fold to resemble tRNA(Ala) and it encodes a 'tag peptide', a short internal open reading frame. During trans-translation Ala-aminoacylated tmRNA acts like a tRNA, entering the A-site of stalled ribosomes, displacing the stalled mRNA. The ribosome then switches to translate the ORF on the tmRNA; the nascent peptide is terminated with the 'tag peptide' encoded by the tmRNA and targeted for degradation. The ribosome is freed to recommence translation, which seems to be the essential function of trans-translation. The polypeptide is SsrA-binding protein (Vibrio vulnificus (strain YJ016)).